The primary structure comprises 311 residues: Solute carrier family 25 member 36 (311 aa).

Solcar repeat units follow at residues 4–108, 116–203, and 224–308; these read RDTL…CKEK, DSTQ…IKQK, and SDFV…VVYL. 6 helical membrane-spanning segments follow: residues 7-27, 41-57, 111-131, 180-200, 226-246, and 291-311; these read LVHLFAGGCGGTVGAILTCPL, LYISEVQLNTMAGASVN, GVFDPDSTQVHMASAAMAGFT, MSASYAGISETVIHFVIYESI, FVRMMLAAATSKTCATTIAYP, and QIPNTAIMMATYELVVYLLNG.

It belongs to the mitochondrial carrier (TC 2.A.29) family.

The protein localises to the mitochondrion inner membrane. The enzyme catalyses UTP(in) + CTP(out) = UTP(out) + CTP(in). It carries out the reaction CTP(out) + UDP(in) = CTP(in) + UDP(out). It catalyses the reaction UMP(in) + CTP(out) = UMP(out) + CTP(in). The catalysed reaction is dUTP(in) + CTP(out) = dUTP(out) + CTP(in). The enzyme catalyses dUMP(in) + CTP(out) = dUMP(out) + CTP(in). It carries out the reaction CDP(in) + CTP(out) = CDP(out) + CTP(in). It catalyses the reaction CTP(out) + CMP(in) = CTP(in) + CMP(out). The catalysed reaction is dCTP(in) + CTP(out) = dCTP(out) + CTP(in). The enzyme catalyses dCDP(in) + CTP(out) = dCDP(out) + CTP(in). It carries out the reaction dCMP(in) + CTP(out) = dCMP(out) + CTP(in). It catalyses the reaction GTP(in) + CTP(out) = GTP(out) + CTP(in). The catalysed reaction is CTP(out) + GDP(in) = CTP(in) + GDP(out). The enzyme catalyses GMP(in) + CTP(out) = GMP(out) + CTP(in). It carries out the reaction dGTP(in) + CTP(out) = dGTP(out) + CTP(in). It catalyses the reaction dGMP(in) + CTP(out) = dGMP(out) + CTP(in). The catalysed reaction is ITP(in) + CTP(out) = ITP(out) + CTP(in). The enzyme catalyses IDP(in) + CTP(out) = IDP(out) + CTP(in). It carries out the reaction IMP(in) + CTP(out) = IMP(out) + CTP(in). It catalyses the reaction CTP(out) = CTP(in). In terms of biological role, mitochondrial transporter that imports/exports pyrimidine nucleotides into and from mitochondria. Selectively transports cytosine, guanosine, inosine and uridine (deoxy)nucleoside mono-, di-, and triphosphates by antiport mechanism. Catalyzes uniport at much lower rate. May import (deoxy)nucleoside triphosphates in exchange for intramitochondrial (deoxy)nucleoside mono- and diphosphates, thus providing precursors necessary for de novo synthesis of mitochondrial DNA and RNA while exporting products of their catabolism. Participates in mitochondrial genome maintenance, regulation of mitochondrial membrane potential and mitochondrial respiration. This Mus musculus (Mouse) protein is Solute carrier family 25 member 36 (Slc25a36).